Here is a 120-residue protein sequence, read N- to C-terminus: Flagellar protein FliT (120 aa).

The segment at 1-50 (MTNFIPSLTDWHALHALSITMLDLAHSGKWDELIEQEMNYVQLVEGIARN) is required for homodimerization. The segment at 59–97 (LINQAKEILNAVLRNEAELKTLLQHRMEELRQLIDQTGK) is fliD binding.

It belongs to the FliT family. As to quaternary structure, homodimer. Interacts with FliD and FlhC.

The protein localises to the cytoplasm. It localises to the cytosol. Its function is as follows. Dual-function protein that regulates the transcription of class 2 flagellar operons and that also acts as an export chaperone for the filament-capping protein FliD. As a transcriptional regulator, acts as an anti-FlhDC factor; it directly binds FlhC, thus inhibiting the binding of the FlhC/FlhD complex to class 2 promoters, resulting in decreased expression of class 2 flagellar operons. As a chaperone, effects FliD transition to the membrane by preventing its premature polymerization, and by directing it to the export apparatus. The polypeptide is Flagellar protein FliT (Citrobacter koseri (strain ATCC BAA-895 / CDC 4225-83 / SGSC4696)).